We begin with the raw amino-acid sequence, 131 residues long: DNA-directed RNA polymerase subunit omega (131 aa).

It belongs to the RNA polymerase subunit omega family. As to quaternary structure, the RNAP catalytic core consists of 2 alpha, 1 beta, 1 beta' and 1 omega subunit. When a sigma factor is associated with the core the holoenzyme is formed, which can initiate transcription.

It catalyses the reaction RNA(n) + a ribonucleoside 5'-triphosphate = RNA(n+1) + diphosphate. Promotes RNA polymerase assembly. Latches the N- and C-terminal regions of the beta' subunit thereby facilitating its interaction with the beta and alpha subunits. In Chelativorans sp. (strain BNC1), this protein is DNA-directed RNA polymerase subunit omega.